Consider the following 271-residue polypeptide: 5-deoxy-glucuronate isomerase (271 aa).

This sequence belongs to the isomerase IolB family.

The enzyme catalyses 5-deoxy-D-glucuronate = 5-dehydro-2-deoxy-D-gluconate. The protein operates within polyol metabolism; myo-inositol degradation into acetyl-CoA; acetyl-CoA from myo-inositol: step 4/7. Its function is as follows. Involved in the isomerization of 5-deoxy-glucuronate (5DG) to 5-dehydro-2-deoxy-D-gluconate (DKG or 2-deoxy-5-keto-D-gluconate). The chain is 5-deoxy-glucuronate isomerase from Shouchella clausii (strain KSM-K16) (Alkalihalobacillus clausii).